The chain runs to 376 residues: Phytanoyl-CoA hydroxylase interacting protein-like (376 aa).

S12 and S15 each carry phosphoserine. An N-linked (GlcNAc...) asparagine glycan is attached at N23. Position 25 is a phosphoserine (S25). A glycan (N-linked (GlcNAc...) asparagine) is linked at N37. Residues 52-161 (VPRNIKISNI…EIIEFCTADY (110 aa)) form the Fibronectin type-III domain.

The protein belongs to the PHYHIP family.

Functionally, may play a role in the development of the central system. This is Phytanoyl-CoA hydroxylase interacting protein-like (PHYHIPL) from Bos taurus (Bovine).